We begin with the raw amino-acid sequence, 308 residues long: UDP-N-acetylenolpyruvoylglucosamine reductase (308 aa).

The 165-residue stretch at 33-197 (TGGNADFYLS…LEASFNLAPG (165 aa)) folds into the FAD-binding PCMH-type domain. Arg-176 is an active-site residue. Ser-226 functions as the Proton donor in the catalytic mechanism. The active site involves Glu-296.

Belongs to the MurB family. The cofactor is FAD.

It localises to the cytoplasm. It carries out the reaction UDP-N-acetyl-alpha-D-muramate + NADP(+) = UDP-N-acetyl-3-O-(1-carboxyvinyl)-alpha-D-glucosamine + NADPH + H(+). Its pathway is cell wall biogenesis; peptidoglycan biosynthesis. Functionally, cell wall formation. In Staphylococcus carnosus (strain TM300), this protein is UDP-N-acetylenolpyruvoylglucosamine reductase.